Reading from the N-terminus, the 103-residue chain is Small ribosomal subunit protein uS10 (103 aa).

Belongs to the universal ribosomal protein uS10 family. As to quaternary structure, part of the 30S ribosomal subunit.

Functionally, involved in the binding of tRNA to the ribosomes. The protein is Small ribosomal subunit protein uS10 of Polynucleobacter asymbioticus (strain DSM 18221 / CIP 109841 / QLW-P1DMWA-1) (Polynucleobacter necessarius subsp. asymbioticus).